Consider the following 585-residue polypeptide: Trehalase (585 aa).

An N-terminal signal peptide occupies residues 1–32; that stretch reads MAKTTPMAKPSVGLLTLQVLVFCALTGSLASA. Residues R184 and 191–192 contribute to the substrate site; that span reads WD. N207 carries an N-linked (GlcNAc...) asparagine glycan. Residues N228, 237–239, 302–304, and G336 each bind substrate; these read RSQ and RPE. Residue D338 is the Proton donor/acceptor of the active site. N348 carries N-linked (GlcNAc...) asparagine glycosylation. The active-site Proton donor/acceptor is E535. E550 lines the substrate pocket.

This sequence belongs to the glycosyl hydrolase 37 family. In terms of tissue distribution, expressed by the venom gland.

The protein localises to the secreted. It catalyses the reaction alpha,alpha-trehalose + H2O = alpha-D-glucose + beta-D-glucose. This is Trehalase (tre1) from Pimpla hypochondriaca (Parasitoid wasp).